A 113-amino-acid chain; its full sequence is Dynein light chain Tctex-type 1 (113 aa).

Met-1 carries the post-translational modification N-acetylmethionine. The segment at 41–113 is interaction with GNB1; it reads QWTTNVVEQT…CIVSAFGLSI (73 aa).

It belongs to the dynein light chain Tctex-type family. As to quaternary structure, homodimer. The cytoplasmic dynein 1 complex consists of two catalytic heavy chains (HCs) and a number of non-catalytic subunits presented by intermediate chains (ICs), light intermediate chains (LICs) and light chains (LCs); the composition seems to vary in respect to the IC, LIC and LC composition. The heavy chain homodimer serves as a scaffold for the probable homodimeric assembly of the respective non-catalytic subunits. The ICs and LICs bind directly to the HC dimer and dynein LCs assemble on the IC dimer. DYNLT1 and DYNLT3 compete for association with dynein IC (DYNC1I1 or DYNC1I2). Self-associates. Interacts with RHO. Interacts with DYNC1I1 and DYNC1I2. Interacts with DOC2A, DOC2B and SCN10A. Interacts with PVR. Interacts with SVIL isoform 2. Interacts with GNB1; the interaction occurs in presence of guanine nucleotide-binding protein G(T) subunit gamma; the interaction diminishes the association of DYNLT1 with dynein IC (DYNC1I1 or DYNC1I2). Interacts with GNB2, GNB3 and GNB5; the interactions occur in presence of guanine nucleotide-binding protein G(T) subunit gamma. Interacts with ACVR2B and ARHGEF2. Interacts with DNAI4. Interacts with CFAP61. Phosphorylated by BMPR2. The phosphorylation status is proposed to regulate the association with the cytoplasmic dynein complex and may have role in cytoplasmic dynein cargo release.

The protein localises to the golgi apparatus. Its subcellular location is the cytoplasm. It localises to the cytoskeleton. The protein resides in the spindle. Its function is as follows. Acts as one of several non-catalytic accessory components of the cytoplasmic dynein 1 complex that are thought to be involved in linking dynein to cargos and to adapter proteins that regulate dynein function. Cytoplasmic dynein 1 acts as a motor for the intracellular retrograde motility of vesicles and organelles along microtubules. Binds to transport cargos and is involved in apical cargo transport such as rhodopsin-bearing vesicles in polarized epithelia. Is involved in intracellular targeting of D-type retrovirus gag polyproteins to the cytoplasmic assembly site. May also be a accessory component of axonemal dynein. In terms of biological role, plays a role in neuronal morphogenesis; the function is independent of cytoplasmic dynein and seems to be coupled to regulation of the actin cytoskeleton by enhancing Rac1 activity. Required for neurite outgrowth. The function in neurogenesis may be regulated by association with a G-protein beta-gamma dimer. May function as a receptor-independent activator of heterotrimeric G-protein signaling; the activation appears to be independent of a nucleotide exchange. Plays a role in regulating neurogenesis; inhibits the genesis of neurons from precursor cells during cortical development presumably by antagonizing ARHGEF2. Unrelated to the role in retrograde microtubule-associated movement may play a role in the dimerization of cytoplasmic proteins/domains such as for ACVR2B. Binds to the cytoplasmic domain of ACVR2B and, in vitro, inhibits ACVR2B signaling. Involved in the regulation of mitotic spindle orientation. This is Dynein light chain Tctex-type 1 (Dynlt1) from Rattus norvegicus (Rat).